We begin with the raw amino-acid sequence, 64 residues long: Large ribosomal subunit protein bL33m (64 aa).

It belongs to the bacterial ribosomal protein bL33 family. Component of the mitochondrial ribosome large subunit (39S) which comprises a 16S rRNA and about 50 distinct proteins.

The protein localises to the mitochondrion. This Drosophila melanogaster (Fruit fly) protein is Large ribosomal subunit protein bL33m (mRpL33).